The primary structure comprises 258 residues: UPF0246 protein YaaA (258 aa).

This sequence belongs to the UPF0246 family.

This Shigella sonnei (strain Ss046) protein is UPF0246 protein YaaA.